Here is a 1400-residue protein sequence, read N- to C-terminus: DNA-directed RNA polymerase subunit beta' (1400 aa).

The Zn(2+) site is built by C71, C73, C86, and C89. The Mg(2+) site is built by D462, D464, and D466. Zn(2+)-binding residues include C811, C885, C892, and C895.

This sequence belongs to the RNA polymerase beta' chain family. As to quaternary structure, the RNAP catalytic core consists of 2 alpha, 1 beta, 1 beta' and 1 omega subunit. When a sigma factor is associated with the core the holoenzyme is formed, which can initiate transcription. Mg(2+) is required as a cofactor. It depends on Zn(2+) as a cofactor.

It carries out the reaction RNA(n) + a ribonucleoside 5'-triphosphate = RNA(n+1) + diphosphate. In terms of biological role, DNA-dependent RNA polymerase catalyzes the transcription of DNA into RNA using the four ribonucleoside triphosphates as substrates. This chain is DNA-directed RNA polymerase subunit beta', found in Brucella abortus (strain S19).